The sequence spans 396 residues: Acetyl-CoA acetyltransferase (396 aa).

The Acyl-thioester intermediate role is filled by C88. Active-site proton acceptor residues include H352 and C382.

This sequence belongs to the thiolase-like superfamily. Thiolase family. As to quaternary structure, homotetramer.

It catalyses the reaction 2 acetyl-CoA = acetoacetyl-CoA + CoA. The protein operates within biopolymer metabolism; poly-(R)-3-hydroxybutanoate biosynthesis. Functionally, when expressed in E.coli with Synechocystis PhaB, PhaC and PhaE confers the ability to synthesize up to 12% (w/w) poly(3-hydroxybutyrate) (PHB) depending on the carbon source. The protein is Acetyl-CoA acetyltransferase of Synechocystis sp. (strain ATCC 27184 / PCC 6803 / Kazusa).